The chain runs to 191 residues: Orotate phosphoribosyltransferase (191 aa).

5-phospho-alpha-D-ribose 1-diphosphate is bound at residue 116 to 124 (EDVVTTGGS). Residues Thr120 and Arg148 each contribute to the orotate site.

Belongs to the purine/pyrimidine phosphoribosyltransferase family. PyrE subfamily. As to quaternary structure, homodimer. The cofactor is Mg(2+).

The enzyme catalyses orotidine 5'-phosphate + diphosphate = orotate + 5-phospho-alpha-D-ribose 1-diphosphate. It functions in the pathway pyrimidine metabolism; UMP biosynthesis via de novo pathway; UMP from orotate: step 1/2. Catalyzes the transfer of a ribosyl phosphate group from 5-phosphoribose 1-diphosphate to orotate, leading to the formation of orotidine monophosphate (OMP). The protein is Orotate phosphoribosyltransferase of Carboxydothermus hydrogenoformans (strain ATCC BAA-161 / DSM 6008 / Z-2901).